A 114-amino-acid polypeptide reads, in one-letter code: Hydrogenase maturation factor HypA (114 aa).

Position 2 (His2) interacts with Ni(2+). The Zn(2+) site is built by Cys73, Cys76, Cys90, and Cys93.

It belongs to the HypA/HybF family.

Its function is as follows. Involved in the maturation of [NiFe] hydrogenases. Required for nickel insertion into the metal center of the hydrogenase. In Chloroflexus aurantiacus (strain ATCC 29366 / DSM 635 / J-10-fl), this protein is Hydrogenase maturation factor HypA.